The chain runs to 267 residues: Undecaprenyl-diphosphatase (267 aa).

The next 7 membrane-spanning stretches (helical) occupy residues 1–21, 40–60, 85–105, 111–131, 190–210, 219–239, and 245–265; these read MSLF…FLPV, GQVI…LYFW, LAMG…ALHF, ALRS…LLWW, MLMS…DVAV, DGAI…SLMM, and VSFT…LGIA.

It belongs to the UppP family.

The protein localises to the cell inner membrane. It catalyses the reaction di-trans,octa-cis-undecaprenyl diphosphate + H2O = di-trans,octa-cis-undecaprenyl phosphate + phosphate + H(+). Catalyzes the dephosphorylation of undecaprenyl diphosphate (UPP). Confers resistance to bacitracin. This Ruegeria pomeroyi (strain ATCC 700808 / DSM 15171 / DSS-3) (Silicibacter pomeroyi) protein is Undecaprenyl-diphosphatase.